The sequence spans 228 residues: 7-cyano-7-deazaguanine synthase (228 aa).

7–17 (LSGGLDSSTAL) provides a ligand contact to ATP. Cysteine 190, cysteine 202, cysteine 205, and cysteine 208 together coordinate Zn(2+).

Belongs to the QueC family. The cofactor is Zn(2+).

The catalysed reaction is 7-carboxy-7-deazaguanine + NH4(+) + ATP = 7-cyano-7-deazaguanine + ADP + phosphate + H2O + H(+). It participates in purine metabolism; 7-cyano-7-deazaguanine biosynthesis. In terms of biological role, catalyzes the ATP-dependent conversion of 7-carboxy-7-deazaguanine (CDG) to 7-cyano-7-deazaguanine (preQ(0)). This is 7-cyano-7-deazaguanine synthase from Acaryochloris marina (strain MBIC 11017).